The following is a 101-amino-acid chain: Urease subunit beta (101 aa).

The protein belongs to the urease beta subunit family. As to quaternary structure, heterotrimer of UreA (gamma), UreB (beta) and UreC (alpha) subunits. Three heterotrimers associate to form the active enzyme.

Its subcellular location is the cytoplasm. It carries out the reaction urea + 2 H2O + H(+) = hydrogencarbonate + 2 NH4(+). Its pathway is nitrogen metabolism; urea degradation; CO(2) and NH(3) from urea (urease route): step 1/1. This chain is Urease subunit beta, found in Ralstonia pickettii (strain 12J).